The following is a 509-amino-acid chain: MWVLLVFFLLTLTYLFWPKTKGSGAKYPRSLPVLPVVGSLPFLPRRGHQHMNFFKLQDKYGPIFSFRLGSKTTVVIGDHQLAKEVLLKKGKEFSGRPRVMTLDILSDNQKGIAFADHGTSWQLHRKLALSTFSLFKGGNLKLENIINQEIKVLCDFLATRNGESIDLAQPLSLAMTNIVSFICFNFSFKKGDPALQAIVNFNDGILDAVGKEILYDMFPGIRILPSQTLENMKQCVRMRNELLREILENRKENYSRNSITNLLDIMIQAKTNAESNTGGPDHNLKLLSDRHMLATVADIFGAGVETSASVVKWIVAFLLHYPLLRKKIQDAIDQNIGFNRAPSISDRNQLVLLEATIREVLRFRPVSPTLIPHRAIIDSSIGEFTIDKDTDVVVNLWALHHNEKEWHRPDLFMPERFLDPTGTQLISPSLSYLPFGAGPRSCVGEMLARQELFLFTAGLLQRFDLELPDDGQLPCLVGNPSLVLQIDPFKVKIKERQAWKEAHTEGSTS.

Substrate is bound at residue asparagine 202. Cysteine 442 is a binding site for heme.

It belongs to the cytochrome P450 family. Heme serves as cofactor.

It localises to the endoplasmic reticulum membrane. The protein resides in the microsome membrane. The catalysed reaction is a C21-steroid + reduced [NADPH--hemoprotein reductase] + O2 = a 17alpha-hydroxy-C21-steroid + oxidized [NADPH--hemoprotein reductase] + H2O + H(+). It catalyses the reaction progesterone + reduced [NADPH--hemoprotein reductase] + O2 = 17alpha-hydroxyprogesterone + oxidized [NADPH--hemoprotein reductase] + H2O + H(+). The enzyme catalyses pregnenolone + reduced [NADPH--hemoprotein reductase] + O2 = 17alpha-hydroxypregnenolone + oxidized [NADPH--hemoprotein reductase] + H2O + H(+). It carries out the reaction 17alpha-hydroxyprogesterone + reduced [NADPH--hemoprotein reductase] + O2 = androst-4-ene-3,17-dione + acetate + oxidized [NADPH--hemoprotein reductase] + H2O + 2 H(+). The catalysed reaction is 17alpha-hydroxyprogesterone + reduced [NADPH--hemoprotein reductase] + O2 = 16alpha,17alpha-dihydroxyprogesterone + oxidized [NADPH--hemoprotein reductase] + H2O + H(+). It catalyses the reaction 16alpha,17alpha-dihydroxyprogesterone + reduced [NADPH--hemoprotein reductase] + O2 = 6beta,16alpha,17alpha-trihydroxyprogesterone + oxidized [NADPH--hemoprotein reductase] + H2O + H(+). The enzyme catalyses 17alpha-hydroxypregnenolone + reduced [NADPH--hemoprotein reductase] + O2 = 3beta-hydroxyandrost-5-en-17-one + acetate + oxidized [NADPH--hemoprotein reductase] + H2O + 2 H(+). It carries out the reaction 16alpha,17alpha-dihydroxypregnenolone + reduced [NADPH--hemoprotein reductase] + O2 = 3beta,16alpha-dihydroxy-androst-5-en-17-one + acetate + oxidized [NADPH--hemoprotein reductase] + H2O + 2 H(+). The catalysed reaction is 3beta-hydroxyandrost-5-en-17-one + reduced [NADPH--hemoprotein reductase] + O2 = 3beta,16alpha-dihydroxy-androst-5-en-17-one + oxidized [NADPH--hemoprotein reductase] + H2O + H(+). It catalyses the reaction androst-4-ene-3,17-dione + reduced [NADPH--hemoprotein reductase] + O2 = 16alpha-hydroxyandrost-4-ene-3,17-dione + oxidized [NADPH--hemoprotein reductase] + H2O + H(+). It functions in the pathway steroid hormone biosynthesis. Its pathway is steroid biosynthesis; glucocorticoid biosynthesis. Its activity is regulated as follows. Regulated predominantly by intracellular cAMP levels. The 17,20-lyase activity is stimulated by cytochrome b5, which acts as an allosteric effector increasing the Vmax of the lyase activity. Its function is as follows. A cytochrome P450 monooxygenase involved in corticoid and androgen biosynthesis. Catalyzes 17-alpha hydroxylation of C21 steroids, which is common for both pathways. A second oxidative step, required only for androgen synthesis, involves an acyl-carbon cleavage. The 17-alpha hydroxy intermediates, as part of adrenal glucocorticoids biosynthesis pathway, are precursors of cortisol. Hydroxylates steroid hormones, pregnenolone and progesterone to form 17-alpha hydroxy metabolites, followed by the cleavage of the C17-C20 bond to form C19 steroids, dehydroepiandrosterone (DHEA) and androstenedione. Has 16-alpha hydroxylase activity. Catalyzes 16-alpha hydroxylation of 17-alpha hydroxy pregnenolone, followed by the cleavage of the C17-C20 bond to form 16-alpha-hydroxy DHEA. Also 16-alpha hydroxylates androgens, relevant for estriol synthesis. Mechanistically, uses molecular oxygen inserting one oxygen atom into a substrate, and reducing the second into a water molecule, with two electrons provided by NADPH via cytochrome P450 reductase (CPR; NADPH-ferrihemoprotein reductase). This chain is Steroid 17-alpha-hydroxylase/17,20 lyase (CYP17A1), found in Sus scrofa (Pig).